Here is a 1175-residue protein sequence, read N- to C-terminus: Pyruvate carboxylase (1175 aa).

The 453-residue stretch at 22-474 (NANKILVANR…WTTFIDDTPS (453 aa)) folds into the Biotin carboxylation domain. The ATP site is built by Lys-140, Glu-224, and His-259. Positions 144–341 (RNLAGKCNVP…IVAAQIQIAA (198 aa)) constitute an ATP-grasp domain. Arg-316 is an active-site residue. One can recognise a Pyruvate carboxyltransferase domain in the interval 561-828 (CLIMDTTWRD…NTGITEQNAR (268 aa)). Substrate contacts are provided by residues 569–573 (RDAHQ) and Arg-642. Asp-570 contacts a divalent metal cation. A divalent metal cation is bound by residues Lys-738, His-768, and His-770. An N6-carboxylysine modification is found at Lys-738. Residue Thr-902 coordinates substrate. The 76-residue stretch at 1099 to 1174 (KADAHNPNEV…DAGDLICKIT (76 aa)) folds into the Biotinyl-binding domain. N6-biotinyllysine is present on Lys-1140.

The cofactor is biotin. It depends on Zn(2+) as a cofactor.

The protein localises to the cytoplasm. The enzyme catalyses hydrogencarbonate + pyruvate + ATP = oxaloacetate + ADP + phosphate + H(+). Its pathway is carbohydrate biosynthesis; gluconeogenesis. Functionally, pyruvate carboxylase catalyzes a 2-step reaction, involving the ATP-dependent carboxylation of the covalently attached biotin in the first step and the transfer of the carboxyl group to pyruvate in the second. This chain is Pyruvate carboxylase (PYC), found in Pichia angusta (Yeast).